A 193-amino-acid polypeptide reads, in one-letter code: Peptidyl-tRNA hydrolase (193 aa).

TRNA is bound at residue tyrosine 16. Histidine 21 acts as the Proton acceptor in catalysis. Residues phenylalanine 66, asparagine 68, and asparagine 114 each coordinate tRNA.

Belongs to the PTH family. As to quaternary structure, monomer.

It is found in the cytoplasm. The enzyme catalyses an N-acyl-L-alpha-aminoacyl-tRNA + H2O = an N-acyl-L-amino acid + a tRNA + H(+). In terms of biological role, hydrolyzes ribosome-free peptidyl-tRNAs (with 1 or more amino acids incorporated), which drop off the ribosome during protein synthesis, or as a result of ribosome stalling. Functionally, catalyzes the release of premature peptidyl moieties from peptidyl-tRNA molecules trapped in stalled 50S ribosomal subunits, and thus maintains levels of free tRNAs and 50S ribosomes. The protein is Peptidyl-tRNA hydrolase of Trichlorobacter lovleyi (strain ATCC BAA-1151 / DSM 17278 / SZ) (Geobacter lovleyi).